Reading from the N-terminus, the 204-residue chain is Ribonuclease HII (204 aa).

The RNase H type-2 domain maps to 16 to 204; the sequence is ESIAGCDEVG…RRSFLKKILK (189 aa). 3 residues coordinate a divalent metal cation: D22, E23, and D120.

The protein belongs to the RNase HII family. Mn(2+) serves as cofactor. The cofactor is Mg(2+).

It is found in the cytoplasm. The catalysed reaction is Endonucleolytic cleavage to 5'-phosphomonoester.. In terms of biological role, endonuclease that specifically degrades the RNA of RNA-DNA hybrids. The sequence is that of Ribonuclease HII from Alkaliphilus metalliredigens (strain QYMF).